The primary structure comprises 188 residues: Epididymal-specific lipocalin-5 (188 aa).

Residues 1–19 (MENIMPFALLGLCVGLAAG) form the signal peptide. The cysteines at positions 82 and 176 are disulfide-linked.

This sequence belongs to the calycin superfamily. Lipocalin family. Post-translationally, there are two similar, immunologically cross-reacting forms of this protein, designated B and C, which probably result from different processing of the amino end. In terms of processing, the N-terminus of form C is probably blocked. As to expression, synthesized exclusively in the proximal part (caput epididymidis) of the epididymis. It makes up a substantial part of the total protein in the epididymal luminal fluid and binds to the sperm membrane.

It is found in the secreted. Functionally, associates with spermatozoa in the epididymal fluid but does not bind tightly to them. Binds both all-trans and 9-cis retinoic acid. May act as a retinoid carrier protein which is required for epididymal function and/or sperm maturation. This is Epididymal-specific lipocalin-5 (Lcn5) from Rattus norvegicus (Rat).